The chain runs to 447 residues: Glutamate--tRNA ligase 2 (447 aa).

The 'HIGH' region motif lies at 9–19 (PSPTGYLHIGN). A 'KMSKS' region motif is present at residues 240–244 (GLSKR). An ATP-binding site is contributed by Lys-243.

This sequence belongs to the class-I aminoacyl-tRNA synthetase family. Glutamate--tRNA ligase type 1 subfamily. Monomer.

Its subcellular location is the cytoplasm. It carries out the reaction tRNA(Glu) + L-glutamate + ATP = L-glutamyl-tRNA(Glu) + AMP + diphosphate. Its function is as follows. Catalyzes the attachment of glutamate to tRNA(Glu) in a two-step reaction: glutamate is first activated by ATP to form Glu-AMP and then transferred to the acceptor end of tRNA(Glu). This chain is Glutamate--tRNA ligase 2, found in Methylobacterium sp. (strain 4-46).